A 798-amino-acid chain; its full sequence is Metabotropic glutamate receptor-like protein A (798 aa).

Residues 1–23 form the signal peptide; that stretch reads MNKLKFLIILFITFLFNLKYINS. The Extracellular portion of the chain corresponds to 24 to 388; that stretch reads LKQCKISVLL…DYSNSMKLGL (365 aa). N-linked (GlcNAc...) asparagine glycosylation is found at asparagine 186, asparagine 275, and asparagine 320. A helical transmembrane segment spans residues 389–409; the sequence is TIVSGFCILFCIISMVLVIMF. Topologically, residues 410 to 419 are cytoplasmic; sequence RHAKIIKSAS. The helical transmembrane segment at 420 to 440 threads the bilayer; sequence PIFCLLILFGCIIIFSGCIIF. Residues 441-447 lie on the Extracellular side of the membrane; that stretch reads SLSPTDG. The chain crosses the membrane as a helical span at residues 448–468; it reads ICGARVWLLSIGYTIFLGSLL. Over 469-494 the chain is Cytoplasmic; that stretch reads VKNWRIWLLFDNPKLKKRSITNWKLY. A helical membrane pass occupies residues 495 to 515; sequence PFVAGILAADVLILALWQGLG. Over 516-545 the chain is Extracellular; it reads DIRSESRIGIDSLTKYQYANVCSSNDQGSV. The helical transmembrane segment at 546–566 threads the bilayer; it reads ALYILLVFHGIKLLAACFISF. Residues 567–580 lie on the Cytoplasmic side of the membrane; that stretch reads KIKAVDIEEFNESK. Residues 581 to 601 traverse the membrane as a helical segment; that stretch reads PIASSIYIITFCLFIVIPLMV. Residues 602–609 lie on the Extracellular side of the membrane; sequence SPQSVASQ. A helical membrane pass occupies residues 610 to 630; it reads VITIVVCAIVTTLISISLLFG. Topologically, residues 631–798 are cytoplasmic; that stretch reads SKFYMMATQG…NQSEIDPDDV (168 aa). Residues 714–771 adopt a coiled-coil conformation; it reads AEQDSKLDLENQNDENEIENNQNNQNNIVEDCQKVEKLEKDENLEKDENLEKDENLEK. Positions 752-774 are enriched in basic and acidic residues; sequence EKDENLEKDENLEKDENLEKDNE. The segment at 752–798 is disordered; the sequence is EKDENLEKDENLEKDENLEKDNENQSIIQKKRLSKNFNQSEIDPDDV.

This sequence in the N-terminal section; belongs to the BMP lipoprotein family. It in the C-terminal section; belongs to the G-protein coupled receptor 3 family. GABA-B receptor subfamily.

It localises to the membrane. Its subcellular location is the cytoplasm. The protein resides in the cell cortex. The protein localises to the perinuclear region. May play an important role in the terminal differentiation. The polypeptide is Metabotropic glutamate receptor-like protein A (grlA) (Dictyostelium discoideum (Social amoeba)).